A 1456-amino-acid polypeptide reads, in one-letter code: Ig-like and fibronectin type-III domain-containing protein C27B7.7 (1456 aa).

An N-terminal signal peptide occupies residues 1–16 (MISLSLVLLLLFGVRC). 2 consecutive Fibronectin type-III domains span residues 24-128 (NDDS…SINT) and 132-227 (IPKA…TNST). Asn-64, Asn-146, Asn-164, Asn-198, and Asn-225 each carry an N-linked (GlcNAc...) asparagine glycan. Residues 236–322 (PDEEYTADPQ…DAGDSSKEVN (87 aa)) enclose the Ig-like 1 domain. Residues Cys-254 and Cys-308 are joined by a disulfide bond. Residues 328-426 (PGSPPSEITL…VAMERDTQPI (99 aa)) enclose the Fibronectin type-III 3 domain. Asn-471, Asn-497, and Asn-517 each carry an N-linked (GlcNAc...) asparagine glycan. 3 Fibronectin type-III domains span residues 531 to 631 (APTQ…TLNG), 636 to 736 (PPDN…TAYS), and 737 to 846 (EVPI…WFRT). N-linked (GlcNAc...) asparagine glycans are attached at residues Asn-658, Asn-691, and Asn-692. The Ig-like 2 domain occupies 841–948 (PRWFRTGHGK…GSSSASVEIR (108 aa)). Cysteines 877 and 932 form a disulfide. Asn-893, Asn-898, Asn-969, Asn-1091, Asn-1120, Asn-1133, Asn-1151, Asn-1207, Asn-1268, Asn-1277, Asn-1298, Asn-1350, Asn-1357, and Asn-1382 each carry an N-linked (GlcNAc...) asparagine glycan. The Fibronectin type-III 7 domain maps to 955–1050 (PPENIILTAY…SCISDVLYET (96 aa)). 3 Fibronectin type-III domains span residues 1148–1234 (APTN…TPNG), 1236–1343 (PKTA…ISFD), and 1347–1438 (VIDN…SSPS). A disordered region spans residues 1419–1456 (LGRESPPSEEIDLEFISSPSPTPIISGSRRKVIKEPPL). A compositionally biased stretch (low complexity) spans 1434–1445 (ISSPSPTPIISG).

It localises to the secreted. The sequence is that of Ig-like and fibronectin type-III domain-containing protein C27B7.7 from Caenorhabditis elegans.